Reading from the N-terminus, the 123-residue chain is PTS system glucitol/sorbitol-specific EIIA component (123 aa).

The PTS EIIA type-5 domain maps to 1–116 (MTVIYQTTIT…PDDIAPGSVL (116 aa)). His43 (tele-phosphohistidine intermediate) is an active-site residue. His43 carries the post-translational modification Phosphohistidine; by HPr.

Its subcellular location is the cytoplasm. Its function is as follows. The phosphoenolpyruvate-dependent sugar phosphotransferase system (sugar PTS), a major carbohydrate active transport system, catalyzes the phosphorylation of incoming sugar substrates concomitantly with their translocation across the cell membrane. The enzyme II complex composed of SrlA, SrlB and SrlE is involved in glucitol/sorbitol transport. In Shigella flexneri, this protein is PTS system glucitol/sorbitol-specific EIIA component (srlB).